The sequence spans 655 residues: Protein npp-24 (655 aa).

A helical membrane pass occupies residues 263–283; the sequence is ICSVFVLVSGGGVLSHLVVFP.

Its subcellular location is the membrane. The polypeptide is Protein npp-24 (Caenorhabditis elegans).